The sequence spans 349 residues: Green-sensitive opsin-1 (349 aa).

Residues 1 to 36 (MNGTEGKNFYVPMSNRTGLVRSPFEYPQYYLAEPWQ) lie on the Extracellular side of the membrane. N-linked (GlcNAc...) asparagine glycosylation is found at Asn-2 and Asn-15. Residues 37-61 (FKILALYLFFLMSMGLPINGLTLVV) traverse the membrane as a helical segment. At 62-73 (TAQHKKLRQPLN) the chain is on the cytoplasmic side. Residues 74-99 (FILVNLAVAGTIMVCFGFTVTFYTAI) form a helical membrane-spanning segment. At 100 to 113 (NGYFVLGPTGCAVE) the chain is on the extracellular side. A disulfide bridge connects residues Cys-110 and Cys-187. A helical transmembrane segment spans residues 114–133 (GFMATLGGEVALWSLVVLAI). Topologically, residues 134–152 (ERYIVVCKPMGSFKFSSSH) are cytoplasmic. The chain crosses the membrane as a helical span at residues 153–176 (AFAGIAFTWVMALACAAPPLFGWS). At 177 to 202 (RYIPEGMQCSCGPDYYTLNPDYNNES) the chain is on the extracellular side. A helical membrane pass occupies residues 203-230 (YVIYMFVCHFILPVAVIFFTYGRLVCTV). The Cytoplasmic segment spans residues 231-252 (KAAAAQQQDSASTQKAEREVTK). Residues 253 to 276 (MVILMVFGFLIAWTPYATVAAWIF) traverse the membrane as a helical segment. The Extracellular portion of the chain corresponds to 277 to 284 (FNKGADFS). The chain crosses the membrane as a helical span at residues 285 to 309 (AKFMAIPAFFSKSSALYNPVIYVLL). Lys-296 carries the N6-(retinylidene)lysine modification. Residues 310–349 (NKQFRNCMLTTIFCGKNPLGDDESSTVSTSKTEVSSVSPA) are Cytoplasmic-facing. The interval 329 to 349 (GDDESSTVSTSKTEVSSVSPA) is disordered. The segment covering 334-349 (STVSTSKTEVSSVSPA) has biased composition (low complexity).

Belongs to the G-protein coupled receptor 1 family. Opsin subfamily. In terms of processing, phosphorylated on some or all of the serine and threonine residues present in the C-terminal region. In terms of tissue distribution, the color pigments are found in the cone photoreceptor cells.

It localises to the membrane. Visual pigments are the light-absorbing molecules that mediate vision. They consist of an apoprotein, opsin, covalently linked to cis-retinal. The sequence is that of Green-sensitive opsin-1 from Carassius auratus (Goldfish).